The sequence spans 215 residues: Large ribosomal subunit protein uL3 (215 aa).

At glutamine 156 the chain carries N5-methylglutamine.

Belongs to the universal ribosomal protein uL3 family. As to quaternary structure, part of the 50S ribosomal subunit. Forms a cluster with proteins L14 and L19. In terms of processing, methylated by PrmB.

Its function is as follows. One of the primary rRNA binding proteins, it binds directly near the 3'-end of the 23S rRNA, where it nucleates assembly of the 50S subunit. This is Large ribosomal subunit protein uL3 from Xylella fastidiosa (strain M12).